The sequence spans 108 residues: Cell division protein FtsL (108 aa).

Over 1-24 (MSKDTASQPSLTKLIGLDIFGVGR) the chain is Cytoplasmic. A helical transmembrane segment spans residues 25 to 45 (LHAILLICIFLSAIGVVLATH). Residues 46-108 (NTRQMTVQRE…PDKEVIIKLR (63 aa)) are Periplasmic-facing.

Belongs to the FtsL family. As to quaternary structure, part of a complex composed of FtsB, FtsL and FtsQ.

The protein resides in the cell inner membrane. Essential cell division protein. May link together the upstream cell division proteins, which are predominantly cytoplasmic, with the downstream cell division proteins, which are predominantly periplasmic. The protein is Cell division protein FtsL of Aliivibrio fischeri (strain ATCC 700601 / ES114) (Vibrio fischeri).